We begin with the raw amino-acid sequence, 122 residues long: Small ribosomal subunit protein uS13 (122 aa).

The segment at 95 to 122 is disordered; it reads GLPVRGQRTKTNARTRKGPKKTIAGKKK.

The protein belongs to the universal ribosomal protein uS13 family. In terms of assembly, part of the 30S ribosomal subunit. Forms a loose heterodimer with protein S19. Forms two bridges to the 50S subunit in the 70S ribosome.

Its function is as follows. Located at the top of the head of the 30S subunit, it contacts several helices of the 16S rRNA. In the 70S ribosome it contacts the 23S rRNA (bridge B1a) and protein L5 of the 50S subunit (bridge B1b), connecting the 2 subunits; these bridges are implicated in subunit movement. Contacts the tRNAs in the A and P-sites. This Corynebacterium glutamicum (strain ATCC 13032 / DSM 20300 / JCM 1318 / BCRC 11384 / CCUG 27702 / LMG 3730 / NBRC 12168 / NCIMB 10025 / NRRL B-2784 / 534) protein is Small ribosomal subunit protein uS13.